The sequence spans 401 residues: MNSISKVRKLGKYFLIIDNMFVVIGFYAVFPLISIHFVEQLGWTAFLVGFALGLRQFIQQGLGIIGGAFADKLGAKPMIVSGLFMRTIGFIIMSLAHTPTLLCAACILSALGGTLFDPPRTALVIKLIRPWKLGRFYSILMLEDSICAIIGITLGSWLLQQYNFQLVCLTGAILFFIAGMFNAWRLPAYKISSSHLSLLDGIKQVLHNQKFIIYTLTLSGYYILSAQVMLMLPIRMHEISGQLSYIKYIYITEAILSLLLIIPITYWMEKYFKLETRLMLGLVIMIISLSPIGSVNNLYELLILISLFYIGSIVAEPARETLSALLTNYKARSSYIGFNKLSLALGGTLGYSGGGWLYDLGKELNFYQLPWIALSIIGTITVLILYYQFRYCSIQPSLYTD.

The next 11 membrane-spanning stretches (helical) occupy residues 13 to 33 (YFLI…FPLI), 34 to 54 (SIHF…ALGL), 88 to 108 (IGFI…ACIL), 139 to 159 (ILML…SWLL), 164 to 184 (FQLV…FNAW), 211 to 231 (FIIY…VMLM), 248 to 268 (YIYI…TYWM), 275 to 295 (ETRL…IGSV), 298 to 318 (LYEL…AEPA), 341 to 361 (LSLA…YDLG), and 366 to 386 (FYQL…LILY).

Belongs to the major facilitator superfamily. DHA1 family. MdtH (TC 2.A.1.2.21) subfamily.

Its subcellular location is the cell inner membrane. The chain is Multidrug resistance protein MdtH from Blochmanniella floridana.